Consider the following 495-residue polypeptide: Transcription termination/antitermination protein NusA (495 aa).

In terms of domain architecture, S1 motif spans 135–200 (GQIITGIVKK…RGAQLFLSRS (66 aa)). In terms of domain architecture, KH spans 302-370 (HHTMDIAVDS…KNLNVSEKVI (69 aa)). 2 tandem repeats follow at residues 364-414 (NVSE…KNGL) and 439-489 (GMNE…RNIC). The segment at 364–489 (NVSEKVIKTL…LLIMAARNIC (126 aa)) is 2 X 51 AA approximate repeats.

Belongs to the NusA family. Monomer. Binds directly to the core enzyme of the DNA-dependent RNA polymerase and to nascent RNA.

The protein localises to the cytoplasm. Functionally, participates in both transcription termination and antitermination. The chain is Transcription termination/antitermination protein NusA from Buchnera aphidicola subsp. Schizaphis graminum (strain Sg).